A 345-amino-acid chain; its full sequence is Nuclear distribution protein nudE-like 1 (345 aa).

Residues Q28–V190 adopt a coiled-coil conformation. A self-association region spans residues V56–S166. The interaction with KATNB1 stretch occupies residues D64–E189. Residues Y114–I133 form a required for interaction with PAFAH1B1 region. The interval R175 to V345 is interaction with CENPF. An interaction with YWHAE region spans residues E189 to V256. The interaction with NEFL stretch occupies residues T191 to V345. Residues A195 to V256 form an interaction with KATNA1 region. S215 carries the post-translational modification Phosphoserine. T219 bears the Phosphothreonine; by CDK1 and MAPK1 mark. S231 bears the Phosphoserine mark. The interaction with DISC1 stretch occupies residues T241–Q280. Residue S242 is modified to Phosphoserine; by CDK1. T245 is modified (phosphothreonine; by CDK1 and MAPK1). The tract at residues V256 to V291 is required for localization to the centrosome and interaction with dynein, dynactin, tubulin gamma, PCM1 and PCNT. C273 carries the S-palmitoyl cysteine; by ZDHHC2, ZDHHC3 and ZDHHC7 lipid modification. Residues G315–V345 form a disordered region. Residues L329–G339 are compositionally biased toward low complexity. A Phosphoserine modification is found at S344.

Belongs to the nudE family. Self-associates. Interacts with DISC1, dynein, dynactin, tubulin gamma, KATNA1, KATNB1, microtubules, PAFAH1B1, PCM1, PCNT, and YWHAE. Interacts directly with NEFL and indirectly with NEFH. Interacts (via C-terminus) with CENPF. Interacts with ZNF365. Interacts with PLEKHM1 (via N- and C-terminus). Interacts with GTP-bound RAB9A; the interaction may lead to RAB9A-dynein motor tethering. In terms of processing, phosphorylated in mitosis. Can be phosphorylated by CDK1, CDK5 and MAPK1. Phosphorylation by CDK5 promotes interaction with KATNA1 and YWHAE. Post-translationally, palmitoylation at Cys-273 reduces affinity for dynein.

It is found in the cytoplasm. Its subcellular location is the cytoskeleton. The protein localises to the microtubule organizing center. The protein resides in the centrosome. It localises to the chromosome. It is found in the centromere. Its subcellular location is the kinetochore. The protein localises to the spindle. Its function is as follows. Required for organization of the cellular microtubule array and microtubule anchoring at the centrosome. May regulate microtubule organization at least in part by targeting the microtubule severing protein KATNA1 to the centrosome. Also positively regulates the activity of the minus-end directed microtubule motor protein dynein. May enhance dynein-mediated microtubule sliding by targeting dynein to the microtubule plus ends. Required for several dynein- and microtubule-dependent processes such as the maintenance of Golgi integrity, the centripetal motion of secretory vesicles and the coupling of the nucleus and centrosome. Also required during brain development for the migration of newly formed neurons from the ventricular/subventricular zone toward the cortical plate. Plays a role, together with DISC1, in the regulation of neurite outgrowth. Required for mitosis in some cell types but appears to be dispensible for mitosis in cortical neuronal progenitors, which instead requires NDE1. Facilitates the polymerization of neurofilaments from the individual subunits NEFH and NEFL. Positively regulates lysosome peripheral distribution and ruffled border formation in osteoclasts. Plays a role, together with DISC1, in the regulation of neurite outgrowth. May act as a RAB9A/B effector that tethers RAB9-associated late endosomes to the dynein motor for their retrograde transport to the trans-Golgi network. In Pongo abelii (Sumatran orangutan), this protein is Nuclear distribution protein nudE-like 1 (NDEL1).